The chain runs to 212 residues: Large ribosomal subunit protein uL3 (212 aa).

Residues 129–156 (RRGPMGHGSKNHRAPGSTGAGTTPGRIY) are disordered. The span at 142–153 (APGSTGAGTTPG) shows a compositional bias: low complexity.

It belongs to the universal ribosomal protein uL3 family. Part of the 50S ribosomal subunit. Forms a cluster with proteins L14 and L19.

Functionally, one of the primary rRNA binding proteins, it binds directly near the 3'-end of the 23S rRNA, where it nucleates assembly of the 50S subunit. This Acaryochloris marina (strain MBIC 11017) protein is Large ribosomal subunit protein uL3.